A 372-amino-acid polypeptide reads, in one-letter code: Flagellar P-ring protein (372 aa).

Positions 1 to 26 (MNLSSLPHRLLAAAVALCAIAAPASA) are cleaved as a signal peptide.

This sequence belongs to the FlgI family. As to quaternary structure, the basal body constitutes a major portion of the flagellar organelle and consists of four rings (L,P,S, and M) mounted on a central rod.

Its subcellular location is the periplasm. The protein resides in the bacterial flagellum basal body. In terms of biological role, assembles around the rod to form the L-ring and probably protects the motor/basal body from shearing forces during rotation. The sequence is that of Flagellar P-ring protein from Xanthomonas campestris pv. campestris (strain ATCC 33913 / DSM 3586 / NCPPB 528 / LMG 568 / P 25).